Here is a 179-residue protein sequence, read N- to C-terminus: Large ribosomal subunit protein uL6 (179 aa).

This sequence belongs to the universal ribosomal protein uL6 family. As to quaternary structure, part of the 50S ribosomal subunit.

Its function is as follows. This protein binds to the 23S rRNA, and is important in its secondary structure. It is located near the subunit interface in the base of the L7/L12 stalk, and near the tRNA binding site of the peptidyltransferase center. In Mycobacteroides abscessus (strain ATCC 19977 / DSM 44196 / CCUG 20993 / CIP 104536 / JCM 13569 / NCTC 13031 / TMC 1543 / L948) (Mycobacterium abscessus), this protein is Large ribosomal subunit protein uL6.